Here is a 477-residue protein sequence, read N- to C-terminus: Dihydrolipoyl dehydrogenase (477 aa).

Residues 41–50 (EKRGALGGTC), lysine 59, glycine 124, and 153–155 (TGS) each bind FAD. The cysteines at positions 50 and 55 are disulfide-linked. NAD(+) contacts are provided by residues 190–197 (GGGVIGLE), glutamate 213, valine 248, and glycine 282. Residues aspartate 323 and 330-333 (MLAH) contribute to the FAD site. The active-site Proton acceptor is histidine 456.

Belongs to the class-I pyridine nucleotide-disulfide oxidoreductase family. In terms of assembly, homodimer. FAD is required as a cofactor.

The enzyme catalyses N(6)-[(R)-dihydrolipoyl]-L-lysyl-[protein] + NAD(+) = N(6)-[(R)-lipoyl]-L-lysyl-[protein] + NADH + H(+). This Trypanosoma cruzi protein is Dihydrolipoyl dehydrogenase (LPD).